Consider the following 86-residue polypeptide: Small ribosomal subunit protein bS18 (86 aa).

This sequence belongs to the bacterial ribosomal protein bS18 family. As to quaternary structure, part of the 30S ribosomal subunit. Forms a tight heterodimer with protein bS6.

Functionally, binds as a heterodimer with protein bS6 to the central domain of the 16S rRNA, where it helps stabilize the platform of the 30S subunit. This chain is Small ribosomal subunit protein bS18, found in Campylobacter curvus (strain 525.92).